Reading from the N-terminus, the 177-residue chain is Large ribosomal subunit protein uL6 (177 aa).

It belongs to the universal ribosomal protein uL6 family. Part of the 50S ribosomal subunit.

Functionally, this protein binds to the 23S rRNA, and is important in its secondary structure. It is located near the subunit interface in the base of the L7/L12 stalk, and near the tRNA binding site of the peptidyltransferase center. The sequence is that of Large ribosomal subunit protein uL6 from Rhizorhabdus wittichii (strain DSM 6014 / CCUG 31198 / JCM 15750 / NBRC 105917 / EY 4224 / RW1) (Sphingomonas wittichii).